A 288-amino-acid polypeptide reads, in one-letter code: Probable ketoamine kinase SAOUHSC_02908 (288 aa).

86 to 88 (TYL) serves as a coordination point for ATP. Aspartate 191 (proton acceptor) is an active-site residue.

It belongs to the fructosamine kinase family.

The enzyme catalyses N(6)-(D-ribulosyl)-L-lysine + ATP = N(6)-(3-O-phospho-D-ribulosyl)-L-lysine + ADP + H(+). It carries out the reaction N(6)-(D-erythrulosyl)-L-lysine + ATP = N(6)-(3-O-phospho-D-erythrulosyl)-L-lysine + ADP + H(+). The catalysed reaction is N(6)-D-ribulosyl-L-lysyl-[protein] + ATP = N(6)-(3-O-phospho-D-ribulosyl)-L-lysyl-[protein] + ADP + H(+). It catalyses the reaction N(6)-(D-erythrulosyl)-L-lysyl-[protein] + ATP = N(6)-(3-O-phospho-D-erythrulosyl)-L-lysyl-[protein] + ADP + H(+). Its function is as follows. Ketoamine kinase that phosphorylates ketoamines, such as erythruloselysine and ribuloselysine, on the third carbon of the sugar moiety to generate ketoamine 3-phosphate. Has higher activity on free lysine (erythruloselysine and ribuloselysine), than on ribuloselysine and erythruloselysine residues on glycated proteins. In Staphylococcus aureus (strain NCTC 8325 / PS 47), this protein is Probable ketoamine kinase SAOUHSC_02908.